Reading from the N-terminus, the 287-residue chain is MEIKQIMVAGAGQMGSGIAQTAADAGFYVRMYDVNPEAAEAGLKRLKKQLARDAEKGKRTETEVKSVINRISISQTLEEAEHADIVIEAIAENMAAKTEMFKTLDRICPPHTILASNTSSLPITEIAAVTNRPQRVIGMHFMNPVPVMKLVEVIRGLATSEETALDVMALAEKMGKTAVEVNDFPGFVSNRVLLPMINEAIYCVYEGVAKPEAIDEVMKLGMNHPMGPLALADFIGLDTCLSIMEVLHSGLGDSKYRPCPLLRKYVKAGWLGKKSGRGFYDYEEKTS.

The protein belongs to the 3-hydroxyacyl-CoA dehydrogenase family.

It carries out the reaction (3S)-3-hydroxybutanoyl-CoA + NADP(+) = acetoacetyl-CoA + NADPH + H(+). It participates in lipid metabolism; butanoate metabolism. This chain is Probable 3-hydroxybutyryl-CoA dehydrogenase (mmgB), found in Bacillus subtilis (strain 168).